The primary structure comprises 274 residues: Putative ankyrin repeat protein R597 (274 aa).

ANK repeat units lie at residues 78–112 (VGLP…NNND), 114–144 (PISE…SLKI), 146–174 (SRYH…DIQG), and 176–205 (NLSY…NIND).

The sequence is that of Putative ankyrin repeat protein R597 from Acanthamoeba polyphaga mimivirus (APMV).